The following is a 267-amino-acid chain: MQFNRKEYLKDVKNIVVKVGSSTLTYENGLLNLFHIEHLVRQLVDLHNRGYNVILVSSGAIGAGVGKLGLSEKPKSIPEKQAAAAVGQGILLHTYEKIFAEYGKTIGQILLTKEDMIDEVRSCNATNTFNALLDKRVIPIINENDAVVVDEIKVGDNDTLSAFVSKLVKADLLILMSDIEGLYSCDPRINNDAELINFVEKITKDIISCAGGAGTDLGTGGMATKIKAAKIATSAGIPMLIVNGATNEVLQDVVEGKSVGTWFNAIK.

Lys-18 is an ATP binding site. Residues Ser-58, Asp-145, and Asn-157 each contribute to the substrate site. ATP is bound by residues 177–178 (SD) and 219–225 (TGGMATK).

This sequence belongs to the glutamate 5-kinase family.

The protein resides in the cytoplasm. It carries out the reaction L-glutamate + ATP = L-glutamyl 5-phosphate + ADP. It participates in amino-acid biosynthesis; L-proline biosynthesis; L-glutamate 5-semialdehyde from L-glutamate: step 1/2. In terms of biological role, catalyzes the transfer of a phosphate group to glutamate to form L-glutamate 5-phosphate. This is Glutamate 5-kinase from Clostridium tetani (strain Massachusetts / E88).